Reading from the N-terminus, the 183-residue chain is Caspase recruitment domain-containing protein 19 (183 aa).

A disulfide bond links cysteine 7 and cysteine 77. The 92-residue stretch at 8–99 folds into the CARD domain; it reads DRLVQDTPFL…PLHSCLPSRH (92 aa). A helical transmembrane segment spans residues 122–142; it reads GPVAFLTCLGLAAGLALLIYC.

Associates with BCL10 by CARD-CARD interaction.

It localises to the endoplasmic reticulum membrane. The protein localises to the mitochondrion membrane. Its function is as follows. Plays a role in inhibiting the effects of BCL10-induced activation of NF-kappa-B. May inhibit the phosphorylation of BCL10 in a CARD-dependent manner. The sequence is that of Caspase recruitment domain-containing protein 19 (CARD19) from Bos taurus (Bovine).